The primary structure comprises 850 residues: Bifunctional levopimaradiene synthase, chloroplastic (850 aa).

Residues 1–52 constitute a chloroplast transit peptide; sequence MALPSSSLSSQIHTGATTQCIPHFHGSLNAGTSAGKRRSLYLRWGKGPSKIV. Residue Lys-250 coordinates substrate. Residues Asp-383 and Asp-385 each coordinate Mg(2+). Positions 383–386 match the DXDD motif motif; it reads DIDD. Lys-470 serves as a coordination point for substrate. Mg(2+)-binding residues include Asp-602, Asp-606, Asn-746, Thr-750, and Glu-754. The DDXXD motif motif lies at 602 to 606; it reads DDLYD.

The protein belongs to the terpene synthase family. Tpsd subfamily. Mg(2+) is required as a cofactor.

It localises to the plastid. It is found in the chloroplast. It catalyses the reaction (2E,6E,10E)-geranylgeranyl diphosphate = (+)-copalyl diphosphate. The enzyme catalyses (+)-copalyl diphosphate = abieta-7,13-diene + diphosphate. The catalysed reaction is (+)-copalyl diphosphate = abieta-8(14),12-diene + diphosphate. It carries out the reaction (+)-copalyl diphosphate = neoabietadiene + diphosphate. It functions in the pathway terpene metabolism; oleoresin biosynthesis. Involved in defensive oleoresin formation in conifers in response to insect attack or other injury. Involved in diterpene (C20) olefins biosynthesis. Bifunctional enzyme that catalyzes two sequential cyclizations of geranylgeranyl diphosphate (GGPP) to levopimaradiene. Levopimaradiene is the major products of the enzyme with abietadiene and neoabietadiene. No activity with farnesyl diphosphate (FPP) as substrate. The sequence is that of Bifunctional levopimaradiene synthase, chloroplastic from Pinus contorta (Shore pine).